A 377-amino-acid chain; its full sequence is Chaperone protein DnaJ (377 aa).

Residues 5–70 (DYYEVLGVSR…DKKAAYDQFG (66 aa)) enclose the J domain. The CR-type zinc finger occupies 133 to 211 (GLTKELRIPT…CHGDGRVEKS (79 aa)). C146, C149, C163, C166, C185, C188, C199, and C202 together coordinate Zn(2+). CXXCXGXG motif repeat units follow at residues 146–153 (CDLCEGSG), 163–170 (CGTCHGQG), 185–192 (CPTCHGRG), and 199–206 (CSKCHGDG).

This sequence belongs to the DnaJ family. Homodimer. Zn(2+) serves as cofactor.

The protein localises to the cytoplasm. In terms of biological role, participates actively in the response to hyperosmotic and heat shock by preventing the aggregation of stress-denatured proteins and by disaggregating proteins, also in an autonomous, DnaK-independent fashion. Unfolded proteins bind initially to DnaJ; upon interaction with the DnaJ-bound protein, DnaK hydrolyzes its bound ATP, resulting in the formation of a stable complex. GrpE releases ADP from DnaK; ATP binding to DnaK triggers the release of the substrate protein, thus completing the reaction cycle. Several rounds of ATP-dependent interactions between DnaJ, DnaK and GrpE are required for fully efficient folding. Also involved, together with DnaK and GrpE, in the DNA replication of plasmids through activation of initiation proteins. The sequence is that of Chaperone protein DnaJ from Shewanella baltica (strain OS195).